A 135-amino-acid chain; its full sequence is C-type lectin PAL (135 aa).

4 cysteine pairs are disulfide-bonded: Cys-3–Cys-14, Cys-31–Cys-131, Cys-38–Cys-133, and Cys-106–Cys-123. A C-type lectin domain is found at Met-10 to Gln-132. Gln-96, Asp-98, Glu-104, Asn-119, and Asp-120 together coordinate Ca(2+). The Galactose-binding signature appears at Gln-96–Asp-98.

It belongs to the true venom lectin family. As to quaternary structure, homodimer; disulfide-linked. Expressed by the venom gland.

Its subcellular location is the secreted. Galactose-binding lectin which recognizes specific carbohydrate structures and agglutinates a variety of animal cells by binding to cell-surface glycoproteins and glycolipids. This is a calcium-dependent lectin. Shows high hemagglutinating activity (MHC is 0.25 ug/ml on rabbit erythrocytes). The protein is C-type lectin PAL of Bitis arietans (African puff adder).